Consider the following 248-residue polypeptide: 5'-nucleotidase SurE (248 aa).

4 residues coordinate a divalent metal cation: Asp8, Asp9, Ser39, and Asn91.

It belongs to the SurE nucleotidase family. A divalent metal cation is required as a cofactor.

Its subcellular location is the cytoplasm. It catalyses the reaction a ribonucleoside 5'-phosphate + H2O = a ribonucleoside + phosphate. Nucleotidase that shows phosphatase activity on nucleoside 5'-monophosphates. This chain is 5'-nucleotidase SurE, found in Marinomonas sp. (strain MWYL1).